Reading from the N-terminus, the 399-residue chain is Integral membrane protein GPR137B (399 aa).

A disordered region spans residues 1 to 22; that stretch reads MRPERPRPRGSAPGPMETPPWD. Over 1–46 the chain is Lumenal; the sequence is MRPERPRPRGSAPGPMETPPWDPARNDSLPPTLTPAVPPYVKLGLT. A glycan (N-linked (GlcNAc...) asparagine) is linked at asparagine 26. A helical transmembrane segment spans residues 47–67; it reads VVYTVFYALLFVFIYVQLWLV. Residues 68–79 lie on the Cytoplasmic side of the membrane; sequence LRYRHKRLSYQS. Residues 80-100 traverse the membrane as a helical segment; that stretch reads VFLFLCLFWASLRTVLFSFYF. The Lumenal portion of the chain corresponds to 101-111; the sequence is KDFVAANSLSP. The helical transmembrane segment at 112 to 132 threads the bilayer; it reads FVFWLLYCFPVCLQFFTLTLM. The Cytoplasmic portion of the chain corresponds to 133–159; it reads NLYFTQVIFKAKSKYSPELLKYRLPLY. A helical transmembrane segment spans residues 160 to 180; the sequence is LASLFISLVFLLVNLTCAVLV. Residues 181 to 188 are Lumenal-facing; it reads KTGNWERK. Residues 189–209 form a helical membrane-spanning segment; the sequence is VIVSVRVAINDTLFVLCAVSL. The Cytoplasmic segment spans residues 210 to 237; that stretch reads SICLYKISKMSLANIYLESKGSSVCQVT. The chain crosses the membrane as a helical span at residues 238-258; the sequence is AIGVTVILLYTSRACYNLFIL. Topologically, residues 259–292 are lumenal; sequence SFSQNKSVHSFDYDWYNVSDQADLKNQLGDAGYV. 2 N-linked (GlcNAc...) asparagine glycosylation sites follow: asparagine 263 and asparagine 275. The helical transmembrane segment at 293–313 threads the bilayer; the sequence is LFGVVLFVWELLPTTLVVYFF. Residues 314-399 are Cytoplasmic-facing; it reads RVRNPTKDLT…TLDPDKPSLG (86 aa).

It belongs to the GPR137 family. In terms of assembly, interaction with RRAGA; increases RRAGA recruitment to lysosomes. Interacts with MTOR; this interaction is amino acid sensitive. As to expression, expressed in kidney, heart, brain and placenta.

It is found in the lysosome membrane. In terms of biological role, lysosomal integral membrane protein that regulates the localization and activity of mTORC1, a signaling complex promoting cell growth in response to growth factors, energy levels, and amino acids. Interacts with Rag GTPases and increases the lysosomial localization and activity of Rag GTPases and thereby regulates mTORC1 translocation and activity in lysosome. Involved in the regulation of lysosomal morphology and autophagy. Functionally, also acts as a negative regulator of osteoclast activity. Involved in interleukin-4-induced M2 macrophage polarization. The polypeptide is Integral membrane protein GPR137B (GPR137B) (Homo sapiens (Human)).